Reading from the N-terminus, the 378-residue chain is Ribosomal RNA large subunit methyltransferase G (378 aa).

Belongs to the methyltransferase superfamily. RlmG family.

The protein resides in the cytoplasm. The enzyme catalyses guanosine(1835) in 23S rRNA + S-adenosyl-L-methionine = N(2)-methylguanosine(1835) in 23S rRNA + S-adenosyl-L-homocysteine + H(+). Specifically methylates the guanine in position 1835 (m2G1835) of 23S rRNA. The polypeptide is Ribosomal RNA large subunit methyltransferase G (Escherichia coli O139:H28 (strain E24377A / ETEC)).